A 285-amino-acid polypeptide reads, in one-letter code: Putative cysteine-rich repeat secretory protein 14 (285 aa).

The first 30 residues, 1 to 30 (MSSFCLSKHLILVPILVMMAQLLLIRNVLS), serve as a signal peptide directing secretion. 2 consecutive Gnk2-homologous domains span residues 37-143 (YLYH…SIST) and 161-273 (RPNA…RYPF).

It belongs to the cysteine-rich repeat secretory protein family.

It is found in the secreted. The chain is Putative cysteine-rich repeat secretory protein 14 (CRRSP14) from Arabidopsis thaliana (Mouse-ear cress).